A 262-amino-acid chain; its full sequence is MAPALLLVPAALASFILAFGTGVEFVRFTSLRPLLGGIPESGGPDARHGWLAALQDRSILASLAWDLCLLLLFVVQHSLMATEAVKAWTSRYFGVLQRSLYVACTALALQLVMRYWETTPRGPVLWEARAEPWATWVPLLCFVLHVVSWLLIFSILLVFDYAELMGLKQVYYHVLGLGEPLSLKSPRALRLFSHLRHPVCVELLTVLWVVPTLGTDRLLLALLFTLYLGLAHGLDQQDLRYLRSQLQRKLHLLSRPQDGEAE.

Residues Met-1–Ala-4 lie on the Nuclear side of the membrane. Residues Leu-5 to Phe-28 traverse the membrane as a helical segment. The Perinuclear space portion of the chain corresponds to Thr-29–Ser-58. A helical transmembrane segment spans residues Ile-59 to Met-80. Residues Ala-81 to Gln-97 are Nuclear-facing. Residues Arg-98–Arg-114 form a helical membrane-spanning segment. At Tyr-115–Trp-133 the chain is on the perinuclear space side. A helical transmembrane segment spans residues Ala-134–Leu-164. Residues Met-165–Leu-191 are Nuclear-facing. A helical membrane pass occupies residues Phe-192–Val-210. Topologically, residues Pro-211–Asp-216 are perinuclear space. The chain crosses the membrane as a helical span at residues Arg-217–Leu-234. Over Asp-235–Glu-262 the chain is Nuclear.

It belongs to the nurim family.

The protein resides in the nucleus inner membrane. This is Nurim (Nrm) from Mus musculus (Mouse).